Reading from the N-terminus, the 295-residue chain is Bifunctional protein FolD (295 aa).

NADP(+) is bound by residues 165–167 (GRS), Ser190, and Ile231.

Belongs to the tetrahydrofolate dehydrogenase/cyclohydrolase family. Homodimer.

The catalysed reaction is (6R)-5,10-methylene-5,6,7,8-tetrahydrofolate + NADP(+) = (6R)-5,10-methenyltetrahydrofolate + NADPH. It carries out the reaction (6R)-5,10-methenyltetrahydrofolate + H2O = (6R)-10-formyltetrahydrofolate + H(+). The protein operates within one-carbon metabolism; tetrahydrofolate interconversion. Catalyzes the oxidation of 5,10-methylenetetrahydrofolate to 5,10-methenyltetrahydrofolate and then the hydrolysis of 5,10-methenyltetrahydrofolate to 10-formyltetrahydrofolate. In Nitrosomonas eutropha (strain DSM 101675 / C91 / Nm57), this protein is Bifunctional protein FolD.